The sequence spans 600 residues: MTKENLENELKTLPNSAGVYQYFNQEGKLLYVGKAKNLKNRVKSYFAFTPNLHANPRNSLRIQKMIEETVHLEFITTNSEADALILENSFIKQLHPKYNILLRDDKTYPYIYVNFEEEFPRFEITRKLVKKSKIKYFGPFFKGARELLDALYLYYPLKQKASCKSPCIFYQISRCLAPCDKRISKEKYLEILDEAMHALLNPSILIKNLEKQMLVLAQNENYEEAAKVRDQIVTIKDLEVKVEMDVAKLEDFEVFALAFEDSMLSTLRFVVQNGKIISANSKITPIKNDIQWDQNEIYKQLILENFSMDIPLLANVIYVYEEFEDRVLLEEILSQRFDKKISIKIPKIGEKRRICDLAFQNALLNIEKEQKNHDFTIQKELKFYFELENLPNDIEIFDNSHLQGVANVGAMVTYRINSWDKSKYRKFHLKHKNDYDQMREVLTRRALDFDKIPPPDLWLIDGGKVLLDLAKKIIVSSGANVDILAISKEKIDAKAHRAKGGAKDKIHSLKGEFSLSINDKKLQFLQKLRDEAHRFAISFHQNTKKKQDLKSSKLANLGLSSGVIQKLLAYYGNFESIYKADFKDLTMLVGRKAAQKIKEN.

Residues 15–100 form the GIY-YIG domain; sequence NSAGVYQYFN…IKQLHPKYNI (86 aa). A UVR domain is found at 203-238; it reads SILIKNLEKQMLVLAQNENYEEAAKVRDQIVTIKDL.

This sequence belongs to the UvrC family. In terms of assembly, interacts with UvrB in an incision complex.

It localises to the cytoplasm. Functionally, the UvrABC repair system catalyzes the recognition and processing of DNA lesions. UvrC both incises the 5' and 3' sides of the lesion. The N-terminal half is responsible for the 3' incision and the C-terminal half is responsible for the 5' incision. This Campylobacter jejuni subsp. jejuni serotype O:23/36 (strain 81-176) protein is UvrABC system protein C.